An 872-amino-acid chain; its full sequence is Probable cation-transporting P-type ATPase (872 aa).

At Met-1 to Lys-41 the chain is on the cytoplasmic side. Residues Ser-42–Ser-62 form a helical membrane-spanning segment. The Extracellular segment spans residues Gly-63 to Thr-79. The helical transmembrane segment at Gln-80 to Phe-100 threads the bilayer. Over Lys-101–Leu-237 the chain is Cytoplasmic. The helical transmembrane segment at Glu-238–Leu-257 threads the bilayer. Residues Val-258–Ala-275 lie on the Extracellular side of the membrane. A helical transmembrane segment spans residues Leu-276 to Thr-293. Topologically, residues Phe-294–Cys-642 are cytoplasmic. The active-site 4-aspartylphosphate intermediate is the Asp-331. Mg(2+) contacts are provided by Asp-587 and Asp-591. The helical transmembrane segment at Lys-643–Leu-662 threads the bilayer. Residues Gly-663–Phe-685 lie on the Extracellular side of the membrane. The chain crosses the membrane as a helical span at residues Thr-686–Ala-706. Over Ile-707–Leu-724 the chain is Cytoplasmic. Residues Phe-725 to Phe-747 form a helical membrane-spanning segment. At Tyr-748–Ile-768 the chain is on the extracellular side. Residues Asn-769–Ser-788 form a helical membrane-spanning segment. Residues Leu-789–Asn-801 lie on the Cytoplasmic side of the membrane. The helical transmembrane segment at Pro-802–Phe-824 threads the bilayer. Residues Ile-825 to Pro-842 lie on the Extracellular side of the membrane. Residues Val-843–Lys-863 form a helical membrane-spanning segment. The Cytoplasmic segment spans residues Leu-864 to Val-872.

The protein belongs to the cation transport ATPase (P-type) (TC 3.A.3) family. Type II subfamily.

Its subcellular location is the cell membrane. It carries out the reaction ATP + H2O = ADP + phosphate + H(+). Functionally, could mediate calcium influx. This chain is Probable cation-transporting P-type ATPase (pacL), found in Mycoplasma pneumoniae (strain ATCC 29342 / M129 / Subtype 1) (Mycoplasmoides pneumoniae).